The chain runs to 494 residues: Ankyrin repeat domain-containing protein 33B (494 aa).

The disordered stretch occupies residues 1–80; that stretch reads MVLLAGTGPE…SAESVPEGVP (80 aa). The segment covering 30–42 has biased composition (acidic residues); that stretch reads VEEDPADYEEFED. ANK repeat units lie at residues 84 to 113, 120 to 150, 154 to 183, 189 to 218, and 223 to 255; these read PETA…SVEE, NGRT…DVNW, EGNT…GLDL, FGFT…DVHA, and RGMS…PEQF. Residues 349 to 494 are disordered; the sequence is RAARGPQAQE…RRTAPWKKRT (146 aa). Basic and acidic residues predominate over residues 371–382; sequence TGQEDADSREGS. Residue Ser-405 is modified to Phosphoserine. 2 stretches are compositionally biased toward basic and acidic residues: residues 440–451 and 459–487; these read RPARKGSTKDSG and RYKE…ERRT. Residues 459–488 adopt a coiled-coil conformation; it reads RYKEAKEEKRKAEEAEKKRQAEAQKERRTA.

The sequence is that of Ankyrin repeat domain-containing protein 33B (ANKRD33B) from Homo sapiens (Human).